The chain runs to 493 residues: Glutamyl-tRNA(Gln) amidotransferase subunit A (493 aa).

Active-site charge relay system residues include lysine 78 and serine 158. Catalysis depends on serine 182, which acts as the Acyl-ester intermediate.

The protein belongs to the amidase family. GatA subfamily. In terms of assembly, heterotrimer of A, B and C subunits.

It catalyses the reaction L-glutamyl-tRNA(Gln) + L-glutamine + ATP + H2O = L-glutaminyl-tRNA(Gln) + L-glutamate + ADP + phosphate + H(+). Its function is as follows. Allows the formation of correctly charged Gln-tRNA(Gln) through the transamidation of misacylated Glu-tRNA(Gln) in organisms which lack glutaminyl-tRNA synthetase. The reaction takes place in the presence of glutamine and ATP through an activated gamma-phospho-Glu-tRNA(Gln). In Rickettsia bellii (strain OSU 85-389), this protein is Glutamyl-tRNA(Gln) amidotransferase subunit A.